The primary structure comprises 292 residues: Glycine--tRNA ligase alpha subunit (292 aa).

It belongs to the class-II aminoacyl-tRNA synthetase family. In terms of assembly, tetramer of two alpha and two beta subunits.

It localises to the cytoplasm. The enzyme catalyses tRNA(Gly) + glycine + ATP = glycyl-tRNA(Gly) + AMP + diphosphate. The protein is Glycine--tRNA ligase alpha subunit of Desulfovibrio desulfuricans (strain ATCC 27774 / DSM 6949 / MB).